The chain runs to 583 residues: Lipoprotein LpqB (583 aa).

A signal peptide spans Met-1–Gly-29. Cys-30 carries the N-palmitoyl cysteine lipid modification. Residue Cys-30 is the site of S-diacylglycerol cysteine attachment. The segment at Asn-38–Ser-63 is disordered.

Belongs to the LpqB lipoprotein family.

It is found in the cell membrane. The sequence is that of Lipoprotein LpqB from Corynebacterium jeikeium (strain K411).